The sequence spans 72 residues: Phosphonoacetate hydrolase (72 aa).

In terms of assembly, monomer. Unlike bacterial phosphonoacetate hydrolase, does not require zinc as a cofactor. serves as cofactor.

The catalysed reaction is phosphonoacetate + H2O = acetate + phosphate + H(+). Unaffected by EDTA or Ca(2+), Co(2+), Cu(2+), Mg(2+), Mn(2+), Ni(2+) and Zn(2+). This chain is Phosphonoacetate hydrolase, found in Penicillium oxalicum.